The sequence spans 142 residues: Small ribosomal subunit protein uS9 (142 aa).

The protein belongs to the universal ribosomal protein uS9 family. As to quaternary structure, component of the small ribosomal subunit. Mature ribosomes consist of a small (40S) and a large (60S) subunit. The 40S subunit contains about 32 different proteins and 1 molecule of RNA (18S). The 60S subunit contains 45 different proteins and 3 molecules of RNA (25S, 5.8S and 5S).

It is found in the cytoplasm. Component of the ribosome, a large ribonucleoprotein complex responsible for the synthesis of proteins in the cell. The small ribosomal subunit (SSU) binds messenger RNAs (mRNAs) and translates the encoded message by selecting cognate aminoacyl-transfer RNA (tRNA) molecules. The large subunit (LSU) contains the ribosomal catalytic site termed the peptidyl transferase center (PTC), which catalyzes the formation of peptide bonds, thereby polymerizing the amino acids delivered by tRNAs into a polypeptide chain. The nascent polypeptides leave the ribosome through a tunnel in the LSU and interact with protein factors that function in enzymatic processing, targeting, and the membrane insertion of nascent chains at the exit of the ribosomal tunnel. This chain is Small ribosomal subunit protein uS9 (RPS16A), found in Candida albicans (strain SC5314 / ATCC MYA-2876) (Yeast).